The sequence spans 354 residues: AT-hook motif nuclear-localized protein 11 (354 aa).

Disordered stretches follow at residues 1–158 (MDRR…MMPS) and 290–354 (KREE…LMRG). Composition is skewed to low complexity over residues 46-55 (NSISPFGSNP) and 75-96 (VDSS…PPSG). The Bipartite nuclear localization signal signature appears at 101 to 109 (KRKRGRPRK). The a.T hook 1 DNA-binding region spans 101 to 113 (KRKRGRPRKYGQD). Residues 122-133 (SPSISNVSPNSN) are compositionally biased toward low complexity. Positions 134–146 (KRGRGRPPGSGKK) form a DNA-binding region, a.T hook 2. A PPC domain is found at 159–302 (STGMSFTPHV…ETSEDVQDTD (144 aa)). Acidic residues predominate over residues 294-303 (TSEDVQDTDA). A compositionally biased stretch (polar residues) spans 304 to 327 (LENNNDNTAATSPPVPQQSQNIVQ). Positions 340-354 (MDMHHPHMDIDLMRG) are enriched in basic and acidic residues.

It localises to the nucleus. Functionally, transcription factor that specifically binds AT-rich DNA sequences related to the nuclear matrix attachment regions (MARs). The protein is AT-hook motif nuclear-localized protein 11 of Arabidopsis thaliana (Mouse-ear cress).